The chain runs to 328 residues: Carbonic anhydrase-related protein 10 (328 aa).

Positions 31 to 301 (GWWAYKEVVQ…LNNRCIRTNI (271 aa)) constitute an Alpha-carbonic anhydrase domain.

It belongs to the alpha-carbonic anhydrase family.

Does not have a catalytic activity. The sequence is that of Carbonic anhydrase-related protein 10 (CA10) from Bos taurus (Bovine).